The primary structure comprises 118 residues: MTALTQAHCEACRADAPHVSDEELPVLLRQIPDWNIEVRDGIMQLEKVYLFKNFKHALAFTNAVGEISEAEGHHPGLLTEWGKVTVTWWSHSIKGLHRNDFIMAARTDEVAKTAEGRK.

The protein belongs to the pterin-4-alpha-carbinolamine dehydratase family.

It carries out the reaction (4aS,6R)-4a-hydroxy-L-erythro-5,6,7,8-tetrahydrobiopterin = (6R)-L-erythro-6,7-dihydrobiopterin + H2O. In Pseudomonas aeruginosa (strain LESB58), this protein is Putative pterin-4-alpha-carbinolamine dehydratase.